The chain runs to 208 residues: Single-stranded DNA-binding protein DdrA (208 aa).

Belongs to the RAD52 family. As to quaternary structure, homooligomer composed of 8 to 10 subunits; probably arranged in a ring-structure.

Functionally, ssDNA-binding protein that contributes to the ionizing radiation resistance of D.radiodurans. Plays a role in DNA repair and genome reconstitution, in a RecA-independent process, since DdrA is essential for recovery from severe genomic fragmentation as a result of exposure to severe levels of ionizing radiation in an environment lacking nutrients. In vitro, binds to the 3'-ends of single-stranded DNA, protecting them from nuclease degradation. Thus, DdrA is part of a DNA end-protection system that helps to preserve genome integrity following irradiation or desiccation. Does not display DNA strand annealing activity, unlike eukaryotic Rad52 protein homologs. The chain is Single-stranded DNA-binding protein DdrA (ddrA) from Deinococcus radiodurans (strain ATCC 13939 / DSM 20539 / JCM 16871 / CCUG 27074 / LMG 4051 / NBRC 15346 / NCIMB 9279 / VKM B-1422 / R1).